The sequence spans 135 residues: Small ribosomal subunit protein uS11 (135 aa).

It belongs to the universal ribosomal protein uS11 family. In terms of assembly, part of the 30S ribosomal subunit. Interacts with proteins S7 and S18. Binds to IF-3.

Located on the platform of the 30S subunit, it bridges several disparate RNA helices of the 16S rRNA. Forms part of the Shine-Dalgarno cleft in the 70S ribosome. The polypeptide is Small ribosomal subunit protein uS11 (Protochlamydia amoebophila (strain UWE25)).